We begin with the raw amino-acid sequence, 300 residues long: Probable alpha-L-glutamate ligase (300 aa).

Residues 104–287 (LQLLARQGID…IAGRMIQWIE (184 aa)) form the ATP-grasp domain. ATP contacts are provided by residues lysine 141, 178-179 (EY), aspartate 187, and 211-213 (RSN). Mg(2+) contacts are provided by aspartate 248, glutamate 260, and asparagine 262. Mn(2+) is bound by residues aspartate 248, glutamate 260, and asparagine 262.

Belongs to the RimK family. The cofactor is Mg(2+). Mn(2+) is required as a cofactor.

This chain is Probable alpha-L-glutamate ligase, found in Citrobacter koseri (strain ATCC BAA-895 / CDC 4225-83 / SGSC4696).